The chain runs to 257 residues: Cytoplasmic envelopment protein 1 (257 aa).

The protein belongs to the herpesviridae cytoplasmic envelopment protein 1 family.

Its subcellular location is the virion. It localises to the virion tegument. The protein resides in the host cytoplasm. It is found in the host Golgi apparatus. In terms of biological role, plays a critical role in cytoplasmic virus egress. Participates in the final step of tegumentation and envelope acquisition within the host cytoplasm. The protein is Cytoplasmic envelopment protein 1 (42) of Connochaetes taurinus (Blue wildebeest).